The sequence spans 226 residues: UPF0173 metal-dependent hydrolase CHY_0920 (226 aa).

This sequence belongs to the UPF0173 family.

This Carboxydothermus hydrogenoformans (strain ATCC BAA-161 / DSM 6008 / Z-2901) protein is UPF0173 metal-dependent hydrolase CHY_0920.